The primary structure comprises 232 residues: Large ribosomal subunit protein uL1 (232 aa).

It belongs to the universal ribosomal protein uL1 family. Part of the 50S ribosomal subunit.

Binds directly to 23S rRNA. The L1 stalk is quite mobile in the ribosome, and is involved in E site tRNA release. Its function is as follows. Protein L1 is also a translational repressor protein, it controls the translation of the L11 operon by binding to its mRNA. This Bacillus cereus (strain ATCC 14579 / DSM 31 / CCUG 7414 / JCM 2152 / NBRC 15305 / NCIMB 9373 / NCTC 2599 / NRRL B-3711) protein is Large ribosomal subunit protein uL1.